We begin with the raw amino-acid sequence, 285 residues long: Protease HtpX homolog (285 aa).

2 helical membrane-spanning segments follow: residues 7 to 27 (TAML…MIGG) and 30 to 50 (GMTI…WFSD). His131 provides a ligand contact to Zn(2+). Glu132 is a catalytic residue. A Zn(2+)-binding site is contributed by His135. Transmembrane regions (helical) follow at residues 146-166 (ITAT…FFGG) and 177-197 (IAGI…QMAI). Glu202 provides a ligand contact to Zn(2+).

It belongs to the peptidase M48B family. Zn(2+) serves as cofactor.

The protein resides in the cell inner membrane. The polypeptide is Protease HtpX homolog (Burkholderia ambifaria (strain MC40-6)).